The sequence spans 449 residues: DNA-directed RNA polymerase subunit Rpo1C (449 aa).

Residues 1 to 68 are unknown; sequence MQDVIKKIED…EGEELLKAVE (68 aa). Residues 69 to 449 form a DNA-directed RNA polymerase subunit Rpo1C region; that stretch reads DEYLRILKVR…TGSVSVIMKK (381 aa).

The protein belongs to the RNA polymerase beta' chain family. In terms of assembly, part of the RNA polymerase complex.

It localises to the cytoplasm. It catalyses the reaction RNA(n) + a ribonucleoside 5'-triphosphate = RNA(n+1) + diphosphate. In terms of biological role, DNA-dependent RNA polymerase (RNAP) catalyzes the transcription of DNA into RNA using the four ribonucleoside triphosphates as substrates. Forms part of the jaw domain. The protein is DNA-directed RNA polymerase subunit Rpo1C of Methanothermobacter thermautotrophicus (strain Winter) (Methanobacterium thermoautotrophicum).